The following is a 293-amino-acid chain: Methylsterol monooxygenase 1 (293 aa).

Transmembrane regions (helical) follow at residues 55–75 and 100–120; these read LIVHEALYFSFCLPGFLFQFI and VLLFNHFCIQLPLICGTYYFT. The region spanning 145 to 274 is the Fatty acid hydroxylase domain; that stretch reads CAVIEDTWHY…FTWWDRIFGT (130 aa). The Histidine box-1 signature appears at 157-161; it reads HRLLH. A Histidine box-2 motif is present at residues 170–174; that stretch reads HKVHH. A helical transmembrane segment spans residues 199 to 219; that stretch reads FFIGIVLLCDHVILLWAWVTI. The short motif at 249–255 is the Histidine box-3 element; sequence HHDFHHM.

The protein belongs to the sterol desaturase family. The cofactor is Fe cation. Ubiquitinated by MARCHF6, leading to proteasomal degradation.

Its subcellular location is the endoplasmic reticulum membrane. The catalysed reaction is 4,4-dimethyl-5alpha-cholest-7-en-3beta-ol + 6 Fe(II)-[cytochrome b5] + 3 O2 + 5 H(+) = 4alpha-carboxy-4beta-methyl-5alpha-cholest-7-ene-3beta-ol + 6 Fe(III)-[cytochrome b5] + 4 H2O. The enzyme catalyses 4,4-dimethyl-5alpha-cholesta-8,24-dien-3beta-ol + 6 Fe(II)-[cytochrome b5] + 3 O2 + 5 H(+) = 4beta-methylzymosterol-4alpha-carboxylate + 6 Fe(III)-[cytochrome b5] + 4 H2O. It carries out the reaction 4alpha-methylzymosterol + 6 Fe(II)-[cytochrome b5] + 3 O2 + 5 H(+) = 4alpha-carboxyzymosterol + 6 Fe(III)-[cytochrome b5] + 4 H2O. It catalyses the reaction 4alpha-methyl-5alpha-cholest-7-en-3beta-ol + 6 Fe(II)-[cytochrome b5] + 3 O2 + 5 H(+) = 4alpha-carboxy-5alpha-cholest-7-en-3beta-ol + 6 Fe(III)-[cytochrome b5] + 4 H2O. The catalysed reaction is 4,4-dimethyl-5alpha-cholest-8-en-3beta-ol + 6 Fe(II)-[cytochrome b5] + 3 O2 + 5 H(+) = 4alpha-carboxy-4beta-methyl-5alpha-cholest-8-en-3beta-ol + 6 Fe(III)-[cytochrome b5] + 4 H2O. The enzyme catalyses 4alpha-methyl-5alpha-cholest-8-en-3beta-ol + 6 Fe(II)-[cytochrome b5] + 3 O2 + 5 H(+) = 4alpha-carboxy-5alpha-cholest-8-ene-3beta-ol + 6 Fe(III)-[cytochrome b5] + 4 H2O. It functions in the pathway steroid biosynthesis; zymosterol biosynthesis; zymosterol from lanosterol: step 3/6. Its pathway is steroid biosynthesis; cholesterol biosynthesis. In terms of biological role, catalyzes the three-step monooxygenation required for the demethylation of 4,4-dimethyl and 4alpha-methylsterols, which can be subsequently metabolized to cholesterol. The sequence is that of Methylsterol monooxygenase 1 (MSMO1) from Macaca fascicularis (Crab-eating macaque).